Consider the following 153-residue polypeptide: Ribosomal RNA large subunit methyltransferase H (153 aa).

S-adenosyl-L-methionine-binding positions include Leu70, Gly102, and 121–126; that span reads LSRMTF.

It belongs to the RNA methyltransferase RlmH family. As to quaternary structure, homodimer.

The protein resides in the cytoplasm. The catalysed reaction is pseudouridine(1915) in 23S rRNA + S-adenosyl-L-methionine = N(3)-methylpseudouridine(1915) in 23S rRNA + S-adenosyl-L-homocysteine + H(+). In terms of biological role, specifically methylates the pseudouridine at position 1915 (m3Psi1915) in 23S rRNA. This Geobacter sulfurreducens (strain ATCC 51573 / DSM 12127 / PCA) protein is Ribosomal RNA large subunit methyltransferase H.